Reading from the N-terminus, the 480-residue chain is Vacuolar protein sorting-associated protein 9A (480 aa).

The 145-residue stretch at 111–255 (VKSDEELFEK…IWNIDGESLS (145 aa)) folds into the VPS9 domain. The GTP site is built by asparagine 189 and aspartate 194. The segment covering 276-288 (SASSENQDNQNNL) has biased composition (polar residues). Disordered regions lie at residues 276-338 (SASS…VQSI) and 418-480 (ESEE…PEHA). Residues 289 to 305 (DVREQKSQTLKASRDSD) show a composition bias toward basic and acidic residues. 3 stretches are compositionally biased toward polar residues: residues 327–338 (ASSNPVERVQSI), 427–437 (NAVNFSEGSSK), and 451–461 (VDNTGTQQTAV).

As to quaternary structure, interacts with RAB5A. Interacts with GPA3 (via C-terminus).

It is found in the cytoplasm. Its subcellular location is the golgi apparatus. The protein resides in the trans-Golgi network. It localises to the prevacuolar compartment. Its function is as follows. Functions as a guanine nucleotide exchange factor (GEF) for Rab small GTPases. Activates specifically RAB5A protein. Functions cooperatively with RAB5A to regulate post-Golgi dense vesicle-mediated transport of storage proteins to the type II protein bodies (PBII) protein storage vacuoles in developing endosperm. This Oryza sativa subsp. japonica (Rice) protein is Vacuolar protein sorting-associated protein 9A.